A 123-amino-acid chain; its full sequence is Large ribosomal subunit protein bL20 (123 aa).

Belongs to the bacterial ribosomal protein bL20 family.

Its function is as follows. Binds directly to 23S ribosomal RNA and is necessary for the in vitro assembly process of the 50S ribosomal subunit. It is not involved in the protein synthesizing functions of that subunit. This Chlamydia muridarum (strain MoPn / Nigg) protein is Large ribosomal subunit protein bL20 (rplT).